The primary structure comprises 468 residues: Monocarboxylate transporter 6 (468 aa).

Topologically, residues 1–13 (MARALEQADGRWA) are cytoplasmic. The chain crosses the membrane as a helical span at residues 14–34 (WVVLLSSLVTQALTLGFPTCI). At 35-53 (GVFFTDLQRDFQASNSETS) the chain is on the extracellular side. A helical transmembrane segment spans residues 54–74 (WFPSILGAMVHGGGPLCSILV). The Cytoplasmic portion of the chain corresponds to 75-80 (KHFGCR). The helical transmembrane segment at 81–101 (VTMMLGGVLASLGMVVSTFSG) threads the bilayer. Position 102 (serine 102) is a topological domain, extracellular. Residues 103–122 (LTHLFLTAGVITGLGMCFSF) traverse the membrane as a helical segment. At 123-138 (QSSITVVGLYFVRRRP) the chain is on the cytoplasmic side. Residues 139 to 159 (LANALASMGLSMGVTLWPLLA) form a helical membrane-spanning segment. Residues 160–171 (RYLLETLGWRGA) are Extracellular-facing. A helical membrane pass occupies residues 172–192 (FLIFGGILLHCCVCGALLRPV). The Cytoplasmic segment spans residues 193-239 (ATNEVPEPKEDPLLPPKIPTRSCLATCVSTIRYHLAFDILRHNMGFC). Residues 240–260 (IYVTGVTWMNLGFALPHIFLV) form a helical membrane-spanning segment. Residues 261 to 274 (PYAMHHGVDDYWAA) lie on the Extracellular side of the membrane. The helical transmembrane segment at 275–295 (MLMSIVGFCNIFLRPMAGLLL) threads the bilayer. Over 296-306 (AGRKSLAAYRK) the chain is Cytoplasmic. A helical membrane pass occupies residues 307–327 (YLFAVAILINGLTNLICTVSA). Residues 328-330 (DFR) are Extracellular-facing. The helical transmembrane segment at 331 to 351 (VLLGYCLVYSLSMCGVGILVF) threads the bilayer. Residues 352 to 368 (QVLMDIVPMDRFPSALG) lie on the Cytoplasmic side of the membrane. The chain crosses the membrane as a helical span at residues 369-389 (LFTILCGVTSLISPPLAGLLL). The Extracellular portion of the chain corresponds to 390-396 (DKTNNFS). The chain crosses the membrane as a helical span at residues 397–417 (YVFYMSSGFLVSGSLILGVGF). Residues 418-468 (YAAEKKKLKQDGQAKMENATSEMTPMHDLTSEDKDSAKKQPYPESIYMTNV) lie on the Cytoplasmic side of the membrane. Residues 429–468 (GQAKMENATSEMTPMHDLTSEDKDSAKKQPYPESIYMTNV) form a disordered region. The segment covering 446-455 (LTSEDKDSAK) has biased composition (basic and acidic residues).

The protein belongs to the major facilitator superfamily. Monocarboxylate porter (TC 2.A.1.13) family.

It is found in the cell membrane. In terms of biological role, proton-linked monocarboxylate transporter. Catalyzes the rapid transport across the plasma membrane of many monocarboxylates such as lactate, pyruvate, branched-chain oxo acids derived from leucine, valine and isoleucine, and the ketone bodies acetoacetate, beta-hydroxybutyrate and acetate. The sequence is that of Monocarboxylate transporter 6 (Slc16a5) from Mus musculus (Mouse).